The chain runs to 130 residues: Chaperone protein SycT (130 aa).

Binds to YopT.

In terms of biological role, functions as a specific chaperone for YopT. The sequence is that of Chaperone protein SycT (sycT) from Yersinia enterocolitica serotype O:8 / biotype 1B (strain NCTC 13174 / 8081).